We begin with the raw amino-acid sequence, 184 residues long: NADH dehydrogenase [ubiquinone] 1 alpha subcomplex assembly factor 3 (184 aa).

This sequence belongs to the NDUFAF3 family. As to quaternary structure, interacts with NDUFAF4, NDUFS2 and NDUFS3.

Its subcellular location is the nucleus. The protein localises to the mitochondrion inner membrane. Essential factor for the assembly of mitochondrial NADH:ubiquinone oxidoreductase complex (complex I). This is NADH dehydrogenase [ubiquinone] 1 alpha subcomplex assembly factor 3 (NDUFAF3) from Homo sapiens (Human).